The primary structure comprises 211 residues: Small ribosomal subunit protein uS4 (211 aa).

The S4 RNA-binding domain occupies 99–160 (RRLDSVVYQM…KSRNIQQVRE (62 aa)).

It belongs to the universal ribosomal protein uS4 family. Part of the 30S ribosomal subunit. Contacts protein S5. The interaction surface between S4 and S5 is involved in control of translational fidelity.

Functionally, one of the primary rRNA binding proteins, it binds directly to 16S rRNA where it nucleates assembly of the body of the 30S subunit. In terms of biological role, with S5 and S12 plays an important role in translational accuracy. The chain is Small ribosomal subunit protein uS4 from Petrotoga mobilis (strain DSM 10674 / SJ95).